We begin with the raw amino-acid sequence, 68 residues long: Large ribosomal subunit protein uL29 (68 aa).

It belongs to the universal ribosomal protein uL29 family.

The polypeptide is Large ribosomal subunit protein uL29 (Bradyrhizobium sp. (strain BTAi1 / ATCC BAA-1182)).